Reading from the N-terminus, the 514-residue chain is 1-pyrroline-5-carboxylate dehydrogenase (514 aa).

Residues Glu286 and Cys320 contribute to the active site.

This sequence belongs to the aldehyde dehydrogenase family. RocA subfamily.

The catalysed reaction is L-glutamate 5-semialdehyde + NAD(+) + H2O = L-glutamate + NADH + 2 H(+). It participates in amino-acid degradation; L-proline degradation into L-glutamate; L-glutamate from L-proline: step 2/2. The polypeptide is 1-pyrroline-5-carboxylate dehydrogenase (Staphylococcus aureus (strain MRSA252)).